Here is a 418-residue protein sequence, read N- to C-terminus: Tyrosine--tRNA ligase (418 aa).

Residue Tyr34 participates in L-tyrosine binding. Positions 39 to 48 match the 'HIGH' region motif; that stretch reads PTADSLHLGH. L-tyrosine-binding residues include Tyr169 and Gln173. Positions 229–233 match the 'KMSKS' region motif; the sequence is KFGKS. An ATP-binding site is contributed by Lys232. The S4 RNA-binding domain occupies 352-418; the sequence is LNLVDMLVTA…GKKKYAVLTY (67 aa).

Belongs to the class-I aminoacyl-tRNA synthetase family. TyrS type 1 subfamily. As to quaternary structure, homodimer.

The protein resides in the cytoplasm. It carries out the reaction tRNA(Tyr) + L-tyrosine + ATP = L-tyrosyl-tRNA(Tyr) + AMP + diphosphate + H(+). Catalyzes the attachment of tyrosine to tRNA(Tyr) in a two-step reaction: tyrosine is first activated by ATP to form Tyr-AMP and then transferred to the acceptor end of tRNA(Tyr). This is Tyrosine--tRNA ligase from Streptococcus pyogenes serotype M3 (strain SSI-1).